We begin with the raw amino-acid sequence, 149 residues long: Ribosome-binding factor A (149 aa).

Residues 124–149 (AKLREGAVPAGDADPYKTSSKSESEE) are disordered.

This sequence belongs to the RbfA family. In terms of assembly, monomer. Binds 30S ribosomal subunits, but not 50S ribosomal subunits or 70S ribosomes.

It localises to the cytoplasm. Its function is as follows. One of several proteins that assist in the late maturation steps of the functional core of the 30S ribosomal subunit. Associates with free 30S ribosomal subunits (but not with 30S subunits that are part of 70S ribosomes or polysomes). Required for efficient processing of 16S rRNA. May interact with the 5'-terminal helix region of 16S rRNA. In Corynebacterium glutamicum (strain R), this protein is Ribosome-binding factor A.